The following is a 373-amino-acid chain: Anhydro-N-acetylmuramic acid kinase (373 aa).

13-20 (GTSMDGID) contributes to the ATP binding site.

This sequence belongs to the anhydro-N-acetylmuramic acid kinase family.

It carries out the reaction 1,6-anhydro-N-acetyl-beta-muramate + ATP + H2O = N-acetyl-D-muramate 6-phosphate + ADP + H(+). It functions in the pathway amino-sugar metabolism; 1,6-anhydro-N-acetylmuramate degradation. It participates in cell wall biogenesis; peptidoglycan recycling. Its function is as follows. Catalyzes the specific phosphorylation of 1,6-anhydro-N-acetylmuramic acid (anhMurNAc) with the simultaneous cleavage of the 1,6-anhydro ring, generating MurNAc-6-P. Is required for the utilization of anhMurNAc either imported from the medium or derived from its own cell wall murein, and thus plays a role in cell wall recycling. This Agrobacterium fabrum (strain C58 / ATCC 33970) (Agrobacterium tumefaciens (strain C58)) protein is Anhydro-N-acetylmuramic acid kinase.